Consider the following 293-residue polypeptide: NAD kinase (293 aa).

Residue Asp73 is the Proton acceptor of the active site. NAD(+)-binding positions include Asp73–Gly74, His78, Asn147–Asp148, Arg158, Arg175, Asp177, Thr188–Ser193, and Gln248.

The protein belongs to the NAD kinase family. A divalent metal cation serves as cofactor.

Its subcellular location is the cytoplasm. The enzyme catalyses NAD(+) + ATP = ADP + NADP(+) + H(+). Involved in the regulation of the intracellular balance of NAD and NADP, and is a key enzyme in the biosynthesis of NADP. Catalyzes specifically the phosphorylation on 2'-hydroxyl of the adenosine moiety of NAD to yield NADP. This chain is NAD kinase, found in Nitrosococcus oceani (strain ATCC 19707 / BCRC 17464 / JCM 30415 / NCIMB 11848 / C-107).